Reading from the N-terminus, the 143-residue chain is MTQFDDHPLWQSSLNPADAPAVQSLSPVALAYLGDAVFELYVRCCYLFPPRRIGDFHRRVVAQVRAEQQAQILTTLLPQLTDPEKEWVRRGRNAATSTSRRANPELYQAASGLETLLGYLYLRDARRLDELLALIELPDAAPR.

D35 is an active-site residue.

Belongs to the MrnC RNase family. As to quaternary structure, homodimer. Requires Mg(2+) as cofactor.

The protein localises to the cytoplasm. Its function is as follows. Involved in correct processing of both the 5' and 3' ends of 23S rRNA precursor. Processes 30S rRNA precursor transcript even in absence of ribonuclease 3 (Rnc); Rnc processes 30S rRNA into smaller rRNA precursors. The polypeptide is Mini-ribonuclease 3 (Synechocystis sp. (strain ATCC 27184 / PCC 6803 / Kazusa)).